A 65-amino-acid polypeptide reads, in one-letter code: Large ribosomal subunit protein uL29 (65 aa).

Belongs to the universal ribosomal protein uL29 family.

In Natranaerobius thermophilus (strain ATCC BAA-1301 / DSM 18059 / JW/NM-WN-LF), this protein is Large ribosomal subunit protein uL29.